Reading from the N-terminus, the 168-residue chain is Crossover junction endodeoxyribonuclease RuvC (168 aa).

Active-site residues include Asp7, Glu64, and Asp136. Residues Asp7, Glu64, and Asp136 each contribute to the Mg(2+) site.

The protein belongs to the RuvC family. Homodimer which binds Holliday junction (HJ) DNA. The HJ becomes 2-fold symmetrical on binding to RuvC with unstacked arms; it has a different conformation from HJ DNA in complex with RuvA. In the full resolvosome a probable DNA-RuvA(4)-RuvB(12)-RuvC(2) complex forms which resolves the HJ. Mg(2+) serves as cofactor.

It localises to the cytoplasm. The enzyme catalyses Endonucleolytic cleavage at a junction such as a reciprocal single-stranded crossover between two homologous DNA duplexes (Holliday junction).. Its function is as follows. The RuvA-RuvB-RuvC complex processes Holliday junction (HJ) DNA during genetic recombination and DNA repair. Endonuclease that resolves HJ intermediates. Cleaves cruciform DNA by making single-stranded nicks across the HJ at symmetrical positions within the homologous arms, yielding a 5'-phosphate and a 3'-hydroxyl group; requires a central core of homology in the junction. The consensus cleavage sequence is 5'-(A/T)TT(C/G)-3'. Cleavage occurs on the 3'-side of the TT dinucleotide at the point of strand exchange. HJ branch migration catalyzed by RuvA-RuvB allows RuvC to scan DNA until it finds its consensus sequence, where it cleaves and resolves the cruciform DNA. The protein is Crossover junction endodeoxyribonuclease RuvC of Polynucleobacter necessarius subsp. necessarius (strain STIR1).